The chain runs to 455 residues: Chromosomal replication initiator protein DnaA (455 aa).

The domain I, interacts with DnaA modulators stretch occupies residues 1 to 77 (MASLNENQKF…GFEVFGRMID (77 aa)). Positions 77–116 (DYELYANDELTELELHRLNNQSSIEEQPRSTAKPASPLVS) are domain II. Positions 117 to 333 (GLNEKYNFEN…GALNRVEFVA (217 aa)) are domain III, AAA+ region. ATP is bound by residues glycine 161, glycine 163, lysine 164, and threonine 165. The interval 334-455 (RANGIAVVDI…KDIDSIKRKF (122 aa)) is domain IV, binds dsDNA.

It belongs to the DnaA family. As to quaternary structure, oligomerizes as a right-handed, spiral filament on DNA at oriC.

The protein resides in the cytoplasm. Its function is as follows. Plays an essential role in the initiation and regulation of chromosomal replication. ATP-DnaA binds to the origin of replication (oriC) to initiate formation of the DNA replication initiation complex once per cell cycle. Binds the DnaA box (a 9 base pair repeat at the origin) and separates the double-stranded (ds)DNA. Forms a right-handed helical filament on oriC DNA; dsDNA binds to the exterior of the filament while single-stranded (ss)DNA is stabiized in the filament's interior. The ATP-DnaA-oriC complex binds and stabilizes one strand of the AT-rich DNA unwinding element (DUE), permitting loading of DNA polymerase. After initiation quickly degrades to an ADP-DnaA complex that is not apt for DNA replication. Binds acidic phospholipids. The protein is Chromosomal replication initiator protein DnaA of Lactococcus lactis subsp. lactis (strain IL1403) (Streptococcus lactis).